Reading from the N-terminus, the 567-residue chain is Hexose transporter HXT16 (567 aa).

A compositionally biased stretch (polar residues) spans 1–19 (MASEQSSPEINADNLNSSA). The disordered stretch occupies residues 1 to 32 (MASEQSSPEINADNLNSSAADVHVQPPGEKEW). Over 1–55 (MASEQSSPEINADNLNSSAADVHVQPPGEKEWSDGFYDKEVINGNTPDAPKRGFL) the chain is Cytoplasmic. The chain crosses the membrane as a helical span at residues 56–76 (GYLIIYLLCYPVSFGGFLPGW). Over 77–112 (DSGITAGFINMDNFKMNFGSYKHSTGEYYLSNVRMG) the chain is Extracellular. The chain crosses the membrane as a helical span at residues 113 to 133 (LLVAMFSVGCSIGGVAFARLA). The Cytoplasmic portion of the chain corresponds to 134 to 139 (DTLGRR). A helical membrane pass occupies residues 140 to 160 (LAIVIVVLVYMVGAIIQISSN). Over 161–170 (HKWYQYFVGK) the chain is Extracellular. A helical membrane pass occupies residues 171–191 (IIYGLGAGGCSVLCPMLLSEI). At 192 to 197 (APTDLR) the chain is on the cytoplasmic side. Residues 198-218 (GGLVSLYQLNMTFGIFLGYCS) form a helical membrane-spanning segment. The Extracellular segment spans residues 219-232 (VYGTRKYSNTAQWR). A helical membrane pass occupies residues 233 to 253 (IPVGLCFLWALIIIVGMLLVP). Over 254-336 (ESPRYLIECE…VQTFLQLTGE (83 aa)) the chain is Cytoplasmic. A helical membrane pass occupies residues 337–353 (NYFFFYGTTIFKSVGLT). Residues 354–359 (DGFETS) are Extracellular-facing. Residues 360-377 (IVLGTVNFFSTIIAVMVV) form a helical membrane-spanning segment. Topologically, residues 378-384 (DKIGRRK) are cytoplasmic. A helical transmembrane segment spans residues 385–405 (CLLFGAASMMACMVIFASIGV). Residues 406–427 (KCLYPHGQDGPSSKGAGNAMIV) lie on the Extracellular side of the membrane. The helical transmembrane segment at 428–448 (FTCFYIFCFATTWAPVAYIVV) threads the bilayer. Residues 449 to 465 (AESFPSKVKSKAMSIST) lie on the Cytoplasmic side of the membrane. Residues 466–486 (AFNWLWQFLIGFFTPFITGSI) form a helical membrane-spanning segment. Position 487 (histidine 487) is a topological domain, extracellular. Residues 488 to 508 (FYYGYVFVGCLVAMFLYVFFF) traverse the membrane as a helical segment. Residues 509 to 567 (LPETIGLSLEETQLLYEEGIKPWKSASWVPPSRRGASSRETEAKKKSWKEVLKFPKSFN) lie on the Cytoplasmic side of the membrane. The tract at residues 533–555 (SASWVPPSRRGASSRETEAKKKS) is disordered. Basic and acidic residues predominate over residues 545-555 (SSRETEAKKKS).

The protein belongs to the major facilitator superfamily. Sugar transporter (TC 2.A.1.1) family.

Its subcellular location is the membrane. Probable glucose transporter. This chain is Hexose transporter HXT16 (HXT16), found in Saccharomyces cerevisiae (strain ATCC 204508 / S288c) (Baker's yeast).